Here is a 223-residue protein sequence, read N- to C-terminus: uncharacterized protein (223 aa).

7 helical membrane passes run 25–45 (TYFLLSMTLVTSAIAAMATMA), 46–66 (IGISPIVALVMQLAAIGILFF), 78–98 (LVWTFVFTGLMGGALGPMLNF), 105–125 (GPIVIAQALGLTGMVFLGLSA), 140–160 (FLFAGLIIVIVAALINIFVGS), 161–181 (TVAHLAISSVSALVFSGFILF), and 199–219 (ISMYLNILNLFTSLLSILGIM).

It belongs to the BI1 family.

It localises to the cell membrane. This is an uncharacterized protein from Vibrio cholerae serotype O1 (strain ATCC 39315 / El Tor Inaba N16961).